The primary structure comprises 63 residues: Conotoxin Tx-D0111 (63 aa).

The signal sequence occupies residues 1–19 (MRCLPVFVILLLLIASTPS). Residues 20–47 (DTVPLKTKDDMPQASFHGNARRTLQMLS) constitute a propeptide that is removed on maturation.

Belongs to the conotoxin T superfamily. Post-translationally, contains 2 disulfide bonds that can be either 'C1-C3, C2-C4' or 'C1-C4, C2-C3', since these disulfide connectivities have been observed for conotoxins with cysteine framework V (for examples, see AC P0DQQ7 and AC P81755). In terms of tissue distribution, expressed by the venom duct.

It is found in the secreted. The protein is Conotoxin Tx-D0111 of Conus textile (Cloth-of-gold cone).